Reading from the N-terminus, the 89-residue chain is Dynein light chain (89 aa).

It belongs to the dynein light chain family. In terms of tissue distribution, tegument.

It localises to the cytoplasm. The protein resides in the cytoskeleton. In terms of biological role, acts as a non-catalytic accessory component of a dynein complex. The protein is Dynein light chain (DLC) of Schistosoma mansoni (Blood fluke).